Consider the following 283-residue polypeptide: N-terminal Xaa-Pro-Lys N-methyltransferase 2 (283 aa).

Residues Gly-124, Arg-129, Asp-146, 174–175, and Gln-190 contribute to the S-adenosyl-L-methionine site; that span reads LQ.

It belongs to the methyltransferase superfamily. NTM1 family.

The protein localises to the nucleus. It carries out the reaction N-terminal L-alanyl-L-prolyl-L-lysyl-[protein] + S-adenosyl-L-methionine = N-terminal N-methyl-L-alanyl-L-prolyl-L-lysyl-[protein] + S-adenosyl-L-homocysteine + H(+). It catalyses the reaction N-terminal L-prolyl-L-prolyl-L-lysyl-[protein] + S-adenosyl-L-methionine = N-terminal N-methyl-L-prolyl-L-prolyl-L-lysyl-[protein] + S-adenosyl-L-homocysteine + H(+). The enzyme catalyses N-terminal L-seryl-L-prolyl-L-lysyl-[protein] + S-adenosyl-L-methionine = N-terminal N-methyl-L-seryl-L-prolyl-L-lysyl-[protein] + S-adenosyl-L-homocysteine + H(+). Functionally, alpha N-methyltransferase that methylates the N-terminus of target proteins containing the N-terminal motif [Ala/Pro/Ser]-Pro-Lys when the initiator Met is cleaved. Specifically catalyzes monomethylation of exposed alpha-amino group of Ala or Ser residue in the [Ala/Ser]-Pro-Lys motif and Pro in the Pro-Pro-Lys motif. Predominantly functions as a mono-methyltransferase but is also able to di-/tri-methylate the GPKRIA peptide and di-methylate the PPKRIA peptide (in vitro). May activate NTMT1 by priming its substrates for trimethylation. The chain is N-terminal Xaa-Pro-Lys N-methyltransferase 2 (Ntmt2) from Rattus norvegicus (Rat).